A 64-amino-acid polypeptide reads, in one-letter code: Ferredoxin-like protein in nif region (64 aa).

Residues 2-30 form the 4Fe-4S ferredoxin-type domain; that stretch reads AFKIIASQCTQCGACEFECPSGAISFKTD. Residues Cys-10, Cys-13, Cys-16, Cys-20, Cys-39, Cys-42, Cys-51, and Cys-55 each contribute to the [4Fe-4S] cluster site.

Requires [4Fe-4S] cluster as cofactor.

In Rhizobium leguminosarum bv. trifolii, this protein is Ferredoxin-like protein in nif region (fdxN).